The chain runs to 79 residues: Defensin-like protein 117 (79 aa).

The signal sequence occupies residues 1 to 24 (MTTTKTMLVAFVLTLFFVISSVHC). Intrachain disulfides connect Cys40/Cys75, Cys46/Cys68, Cys53/Cys73, and Cys57/Cys74.

The protein belongs to the DEFL family.

It localises to the secreted. The polypeptide is Defensin-like protein 117 (Arabidopsis thaliana (Mouse-ear cress)).